We begin with the raw amino-acid sequence, 408 residues long: tRNA-specific 2-thiouridylase MnmA (408 aa).

Residues 20–27 (AMSGGVDS) and L46 each bind ATP. C114 acts as the Nucleophile in catalysis. C114 and C210 are oxidised to a cystine. G138 contacts ATP. The interaction with tRNA stretch occupies residues 160-162 (RDQ). The active-site Cysteine persulfide intermediate is C210.

It belongs to the MnmA/TRMU family.

The protein resides in the cytoplasm. The enzyme catalyses S-sulfanyl-L-cysteinyl-[protein] + uridine(34) in tRNA + AH2 + ATP = 2-thiouridine(34) in tRNA + L-cysteinyl-[protein] + A + AMP + diphosphate + H(+). Functionally, catalyzes the 2-thiolation of uridine at the wobble position (U34) of tRNA, leading to the formation of s(2)U34. In Bartonella quintana (strain Toulouse) (Rochalimaea quintana), this protein is tRNA-specific 2-thiouridylase MnmA.